The following is a 1118-amino-acid chain: Carbamoyl phosphate synthase arginine-specific large chain (1118 aa).

Positions 23–420 (QLVEGVNSVL…AFQKALRQVD (398 aa)) are carboxyphosphate synthetic domain. Arginine 150, arginine 190, glycine 196, glycine 197, lysine 227, leucine 229, glutamate 234, glycine 260, valine 261, histidine 262, glutamine 303, and glutamate 317 together coordinate ATP. The ATP-grasp 1 domain maps to 154-346 (ASALKDINIP…LAYTAAKIGL (193 aa)). 3 residues coordinate Mg(2+): glutamine 303, glutamate 317, and asparagine 319. Positions 303, 317, and 319 each coordinate Mn(2+). The tract at residues 421–573 (PSLLGFQGST…YTTYNATKND (153 aa)) is oligomerization domain. The segment at 574-958 (VEFNENGMLV…SYWTAIQSTM (385 aa)) is carbamoyl phosphate synthetic domain. An ATP-grasp 2 domain is found at 698–890 (SSILDSIDVD…FIEIAVKAFL (193 aa)). Arginine 734, lysine 773, isoleucine 775, glutamate 780, glycine 805, valine 806, histidine 807, serine 808, glutamine 848, and glutamate 861 together coordinate ATP. The Mg(2+) site is built by glutamine 848, glutamate 861, and asparagine 863. The Mn(2+) site is built by glutamine 848, glutamate 861, and asparagine 863. The allosteric domain stretch occupies residues 959-1102 (NFHVPLPPSG…KILESHDVIV (144 aa)). Residues 960–1118 (FHVPLPPSGI…WDEFIGFKAY (159 aa)) form the MGS-like domain.

It belongs to the CarB family. Heterodimer composed of 2 chains; the small (or glutamine) chain promotes the hydrolysis of glutamine to ammonia, which is used by the large (or ammonia) chain to synthesize carbamoyl phosphate. Mg(2+) serves as cofactor. The cofactor is Mn(2+).

The protein resides in the cytoplasm. It carries out the reaction hydrogencarbonate + L-glutamine + 2 ATP + H2O = carbamoyl phosphate + L-glutamate + 2 ADP + phosphate + 2 H(+). It catalyses the reaction hydrogencarbonate + NH4(+) + 2 ATP = carbamoyl phosphate + 2 ADP + phosphate + 2 H(+). The protein operates within amino-acid biosynthesis; L-arginine biosynthesis; carbamoyl phosphate from bicarbonate: step 1/1. Its function is as follows. Large subunit of the arginine-specific carbamoyl phosphate synthase (CPSase). CPSase catalyzes the formation of carbamoyl phosphate from the ammonia moiety of glutamine, hydrogencarbonate, and phosphate donated by ATP, constituting the first step of 2 biosynthetic pathways, one leading to arginine and/or urea and the other to pyrimidine nucleotides. The large subunit (synthetase) binds the substrates ammonia (free or transferred from glutamine from the small subunit), hydrogencarbonate and ATP and carries out an ATP-coupled ligase reaction, activating hydrogencarbonate by forming carboxy phosphate which reacts with ammonia to form carbamoyl phosphate. In Saccharomyces cerevisiae (strain ATCC 204508 / S288c) (Baker's yeast), this protein is Carbamoyl phosphate synthase arginine-specific large chain (CPA2).